We begin with the raw amino-acid sequence, 256 residues long: Putative transposase for insertion sequence element IS112 (256 aa).

This sequence belongs to the transposase 11 family.

Functionally, involved in the transposition of the insertion sequence IS112 which inactivates the SalI restriction-modification system. The protein is Putative transposase for insertion sequence element IS112 of Streptomyces albus G.